Reading from the N-terminus, the 314-residue chain is GTP-binding protein gtr2 (314 aa).

5 residues coordinate GTP: S17, S18, S37, H118, and D121.

This sequence belongs to the GTR/RAG GTP-binding protein family.

Its subcellular location is the vacuole membrane. It is found in the cytoplasm. The protein localises to the nucleus. The catalysed reaction is GTP + H2O = GDP + phosphate + H(+). Functionally, GTPase involved in activation of the TORC1 signaling pathway, which promotes growth and represses autophagy in nutrient-rich conditions. Also required for TORC1 inactivation during nitrogen starvation. In Schizosaccharomyces pombe (strain 972 / ATCC 24843) (Fission yeast), this protein is GTP-binding protein gtr2 (gtr2).